Here is a 175-residue protein sequence, read N- to C-terminus: Type-2 ice-structuring protein (175 aa).

The signal sequence occupies residues 1–16 (MLAALLVCAMVALTRA). A propeptide spanning residues 17-33 (ANGDTGKEAVMTGSSGK) is cleaved from the precursor. The C-type lectin domain occupies 36 to 163 (TECPTDWKMF…LHASVCAKPA (128 aa)). Intrachain disulfides connect Cys-38–Cys-49, Cys-66–Cys-159, Cys-103–Cys-134, Cys-123–Cys-145, and Cys-135–Cys-151.

It is found in the secreted. In terms of biological role, antifreeze proteins lower the blood freezing point. This chain is Type-2 ice-structuring protein, found in Osmerus mordax (Rainbow smelt).